The primary structure comprises 407 residues: Multifunctional CCA protein (407 aa).

G8 and R11 together coordinate ATP. CTP is bound by residues G8 and R11. Residues D21 and D23 each contribute to the Mg(2+) site. ATP contacts are provided by R91, R137, and R140. The CTP site is built by R91, R137, and R140. Residues 228–329 (TGMHTLMVSQ…IKIFDKMDLW (102 aa)) form the HD domain.

The protein belongs to the tRNA nucleotidyltransferase/poly(A) polymerase family. Bacterial CCA-adding enzyme type 1 subfamily. In terms of assembly, monomer. Can also form homodimers and oligomers. Mg(2+) serves as cofactor. Ni(2+) is required as a cofactor.

It catalyses the reaction a tRNA precursor + 2 CTP + ATP = a tRNA with a 3' CCA end + 3 diphosphate. The catalysed reaction is a tRNA with a 3' CCA end + 2 CTP + ATP = a tRNA with a 3' CCACCA end + 3 diphosphate. Catalyzes the addition and repair of the essential 3'-terminal CCA sequence in tRNAs without using a nucleic acid template. Adds these three nucleotides in the order of C, C, and A to the tRNA nucleotide-73, using CTP and ATP as substrates and producing inorganic pyrophosphate. tRNA 3'-terminal CCA addition is required both for tRNA processing and repair. Also involved in tRNA surveillance by mediating tandem CCA addition to generate a CCACCA at the 3' terminus of unstable tRNAs. While stable tRNAs receive only 3'-terminal CCA, unstable tRNAs are marked with CCACCA and rapidly degraded. This Aliivibrio salmonicida (strain LFI1238) (Vibrio salmonicida (strain LFI1238)) protein is Multifunctional CCA protein.